An 881-amino-acid chain; its full sequence is DNA replication helicase (881 aa).

A disordered region spans residues 1–32 (MESADILPGSRGTVDRRCEGSEEKITPPRPVE). Positions 13 to 32 (TVDRRCEGSEEKITPPRPVE) are enriched in basic and acidic residues. ATP is bound at residue 105–112 (GNAGSGKS).

The protein belongs to the herpesviridae helicase family. In terms of assembly, associates with the primase and the primase-associated factor to form the helicase-primase complex.

The protein resides in the host nucleus. Functionally, component of the helicase/primase complex. Unwinds the DNA at the replication forks and generates single-stranded DNA for both leading and lagging strand synthesis. The primase synthesizes short RNA primers on the lagging strand that the polymerase elongates using dNTPs. Possesses helicase-like motifs and therefore may act as the helicase subunit of the complex. The chain is DNA replication helicase from Equus caballus (Horse).